Reading from the N-terminus, the 367-residue chain is Quinolinate synthase (367 aa).

Positions 45 and 62 each coordinate iminosuccinate. Residue Cys109 participates in [4Fe-4S] cluster binding. Iminosuccinate-binding positions include Tyr140–Asn142 and Ser161. Residue Cys229 coordinates [4Fe-4S] cluster. Iminosuccinate contacts are provided by residues His255–Glu257 and Thr272. Position 319 (Cys319) interacts with [4Fe-4S] cluster.

It belongs to the quinolinate synthase family. Type 3 subfamily. It depends on [4Fe-4S] cluster as a cofactor.

Its subcellular location is the cytoplasm. It carries out the reaction iminosuccinate + dihydroxyacetone phosphate = quinolinate + phosphate + 2 H2O + H(+). Its pathway is cofactor biosynthesis; NAD(+) biosynthesis; quinolinate from iminoaspartate: step 1/1. Functionally, catalyzes the condensation of iminoaspartate with dihydroxyacetone phosphate to form quinolinate. The polypeptide is Quinolinate synthase (Lysinibacillus sphaericus (strain C3-41)).